We begin with the raw amino-acid sequence, 368 residues long: N-acetylneuraminate epimerase 2 (368 aa).

Residues 1 to 19 (MNKTITALAILMASFAANA) form the signal peptide. Kelch repeat units lie at residues 40–84 (TVYI…AFID), 86–137 (NLYV…FVHN), 139–173 (KAYV…KINA), 174–219 (YYFD…VNKG), 222–265 (TWLI…VAGG), 287–336 (ENYQ…LWNN), and 338–367 (LLII…VTVQ). Glu228 serves as the catalytic Proton acceptor.

The protein belongs to the NanM family. As to quaternary structure, homodimer.

It localises to the periplasm. The catalysed reaction is N-acetyl-alpha-neuraminate = N-acetyl-beta-neuraminate. Functionally, converts alpha-N-acetylneuranimic acid (Neu5Ac) to the beta-anomer, accelerating the equilibrium between the alpha- and beta-anomers. Probably facilitates sialidase-negative bacteria to compete successfully for limited amounts of extracellular Neu5Ac, which is likely taken up in the beta-anomer. In addition, the rapid removal of sialic acid from solution might be advantageous to the bacterium to damp down host responses. The polypeptide is N-acetylneuraminate epimerase 2 (Escherichia coli O6:H1 (strain CFT073 / ATCC 700928 / UPEC)).